The following is a 341-amino-acid chain: Outer membrane protein U (341 aa).

An N-terminal signal peptide occupies residues 1–21; the sequence is MNKTLIALAVSAAAVATGAYA.

Belongs to the Gram-negative porin family. Homotrimer.

Its subcellular location is the cell outer membrane. In terms of biological role, forms pores that allow passive diffusion of small molecules across the outer membrane. This chain is Outer membrane protein U (ompU), found in Vibrio cholerae serotype O1 (strain ATCC 39315 / El Tor Inaba N16961).